A 393-amino-acid chain; its full sequence is Formate-dependent phosphoribosylglycinamide formyltransferase (393 aa).

Residues 22–23 (EL) and E82 each bind N(1)-(5-phospho-beta-D-ribosyl)glycinamide. Residues R114, K155, 160–165 (SSGKGQ), 195–198 (EGFV), and E203 each bind ATP. In terms of domain architecture, ATP-grasp spans 119-308 (RLAAEELGLP…EFALHVRAFT (190 aa)). Residues E267 and E279 each coordinate Mg(2+). Residues D286, K356, and 363 to 364 (RR) contribute to the N(1)-(5-phospho-beta-D-ribosyl)glycinamide site.

It belongs to the PurK/PurT family. Homodimer.

The catalysed reaction is N(1)-(5-phospho-beta-D-ribosyl)glycinamide + formate + ATP = N(2)-formyl-N(1)-(5-phospho-beta-D-ribosyl)glycinamide + ADP + phosphate + H(+). It functions in the pathway purine metabolism; IMP biosynthesis via de novo pathway; N(2)-formyl-N(1)-(5-phospho-D-ribosyl)glycinamide from N(1)-(5-phospho-D-ribosyl)glycinamide (formate route): step 1/1. In terms of biological role, involved in the de novo purine biosynthesis. Catalyzes the transfer of formate to 5-phospho-ribosyl-glycinamide (GAR), producing 5-phospho-ribosyl-N-formylglycinamide (FGAR). Formate is provided by PurU via hydrolysis of 10-formyl-tetrahydrofolate. The polypeptide is Formate-dependent phosphoribosylglycinamide formyltransferase (Vibrio cholerae serotype O1 (strain M66-2)).